The sequence spans 789 residues: Mitochondrial inner membrane m-AAA protease component AFG3L1 (789 aa).

A mitochondrion-targeting transit peptide spans 1–70 (MLLRLVGAAG…KLTSFSPRLY (70 aa)). The interval 81-121 (FKNKKNRKSASPGNSVPPKKEPKNAGPGGDGGNRGGKGDDF) is disordered. Residues 106 to 115 (GPGGDGGNRG) are compositionally biased toward gly residues. Transmembrane regions (helical) follow at residues 139-158 (FRSL…YFYF) and 246-264 (FLRS…LYAM). Positions 302, 303, 344, 345, 346, 347, 348, and 482 each coordinate ATP. Histidine 566 contributes to the Zn(2+) binding site. Glutamate 567 is a catalytic residue. Zn(2+)-binding residues include histidine 570 and aspartate 641. The interval 749–789 (EEFVEGTGSLEEDTSLPEGLKDWNKGREEGGTERGLQESPV) is disordered. Over residues 767-789 (GLKDWNKGREEGGTERGLQESPV) the composition is skewed to basic and acidic residues.

This sequence in the N-terminal section; belongs to the AAA ATPase family. In the C-terminal section; belongs to the peptidase M41 family. As to quaternary structure, homooligomer. Forms heterohexamers with Spg7 and Afg3l1. The m-AAA protease is either composed of homohexamers of Afg3l2 or heterohexamers of Afg3l1, Afg3l2 and/or Spg7. Zn(2+) serves as cofactor.

The protein resides in the mitochondrion inner membrane. The enzyme catalyses ATP + H2O = ADP + phosphate + H(+). Functionally, catalytic component of the m-AAA protease, a protease that plays a key role in proteostasis of inner mitochondrial membrane proteins, and which is essential for axonal and neuron development. Afg3l1 possesses both ATPase and protease activities: the ATPase activity is required to unfold substrates, threading them into the internal proteolytic cavity for hydrolysis into small peptide fragments. The m-AAA protease exerts a dual role in the mitochondrial inner membrane: it mediates the processing of specific regulatory proteins and ensures protein quality control by degrading misfolded polypeptides. Required for SPG7 maturation into its active mature form after SPG7 cleavage by mitochondrial-processing peptidase (MPP). This is Mitochondrial inner membrane m-AAA protease component AFG3L1 from Mus musculus (Mouse).